Reading from the N-terminus, the 414-residue chain is Tyrosine--tRNA ligase (414 aa).

Position 38 (tyrosine 38) interacts with L-tyrosine. Residues 43–52 (PTATSLHLGN) carry the 'HIGH' region motif. L-tyrosine is bound by residues tyrosine 165 and glutamine 169. The short motif at 228–232 (KFGKS) is the 'KMSKS' region element. Lysine 231 provides a ligand contact to ATP. One can recognise an S4 RNA-binding domain in the interval 349–414 (FNANQIIDLG…KKYFFMIELI (66 aa)).

This sequence belongs to the class-I aminoacyl-tRNA synthetase family. TyrS type 1 subfamily. As to quaternary structure, homodimer.

Its subcellular location is the cytoplasm. It carries out the reaction tRNA(Tyr) + L-tyrosine + ATP = L-tyrosyl-tRNA(Tyr) + AMP + diphosphate + H(+). Functionally, catalyzes the attachment of tyrosine to tRNA(Tyr) in a two-step reaction: tyrosine is first activated by ATP to form Tyr-AMP and then transferred to the acceptor end of tRNA(Tyr). The chain is Tyrosine--tRNA ligase from Mesomycoplasma hyopneumoniae (strain 7448) (Mycoplasma hyopneumoniae).